A 787-amino-acid chain; its full sequence is Lon protease (787 aa).

Residues 12–210 (LPLIPLRGLA…LIYSILLEEI (199 aa)) form the Lon N-terminal domain. Residue 362–369 (GPPGTGKT) coordinates ATP. The Lon proteolytic domain maps to 599–780 (NPQIGLVNGL…DEVLEQALLK (182 aa)). Residues Ser-686 and Lys-729 contribute to the active site.

The protein belongs to the peptidase S16 family. In terms of assembly, homohexamer. Organized in a ring with a central cavity.

It localises to the cytoplasm. It catalyses the reaction Hydrolysis of proteins in presence of ATP.. Its function is as follows. ATP-dependent serine protease that mediates the selective degradation of mutant and abnormal proteins as well as certain short-lived regulatory proteins. Required for cellular homeostasis and for survival from DNA damage and developmental changes induced by stress. Degrades polypeptides processively to yield small peptide fragments that are 5 to 10 amino acids long. Binds to DNA in a double-stranded, site-specific manner. The polypeptide is Lon protease (Clostridioides difficile (strain 630) (Peptoclostridium difficile)).